The chain runs to 1040 residues: Multidrug resistance protein MdtB (1040 aa).

A run of 12 helical transmembrane segments spans residues phenylalanine 16–isoleucine 36, aspartate 342–leucine 362, isoleucine 369–leucine 389, leucine 396–isoleucine 416, isoleucine 440–phenylalanine 460, phenylalanine 472–proline 492, tryptophan 537–isoleucine 557, leucine 863–valine 883, phenylalanine 888–alanine 908, leucine 911–valine 931, isoleucine 968–valine 988, and isoleucine 998–isoleucine 1018.

Belongs to the resistance-nodulation-cell division (RND) (TC 2.A.6) family. MdtB subfamily. Part of a tripartite efflux system composed of MdtA, MdtB and MdtC. MdtB forms a heteromultimer with MdtC.

It localises to the cell inner membrane. This is Multidrug resistance protein MdtB from Klebsiella pneumoniae (strain 342).